The primary structure comprises 218 residues: Small ribosomal subunit protein uS5 (218 aa).

An S5 DRBM domain is found at 66–129; it reads LKQELLNVNL…REAKLNLVPV (64 aa).

This sequence belongs to the universal ribosomal protein uS5 family. In terms of assembly, part of the 30S ribosomal subunit. Contacts protein S4.

Functionally, with S4 and S12 plays an important role in translational accuracy. This Pyrobaculum aerophilum (strain ATCC 51768 / DSM 7523 / JCM 9630 / CIP 104966 / NBRC 100827 / IM2) protein is Small ribosomal subunit protein uS5.